The following is a 307-amino-acid chain: Elongation factor Ts (307 aa).

Residues Thr80 to Val83 form an involved in Mg(2+) ion dislocation from EF-Tu region.

It belongs to the EF-Ts family.

Its subcellular location is the cytoplasm. In terms of biological role, associates with the EF-Tu.GDP complex and induces the exchange of GDP to GTP. It remains bound to the aminoacyl-tRNA.EF-Tu.GTP complex up to the GTP hydrolysis stage on the ribosome. In Methylobacterium nodulans (strain LMG 21967 / CNCM I-2342 / ORS 2060), this protein is Elongation factor Ts.